An 863-amino-acid polypeptide reads, in one-letter code: Ribosomal protein S6 kinase alpha-5 (863 aa).

Residues 1–21 show a composition bias toward gly residues; that stretch reads MEGEGGGSGGAGTSGDSGDGG. A disordered region spans residues 1–22; it reads MEGEGGGSGGAGTSGDSGDGGE. A Protein kinase 1 domain is found at 48-317; it reads FELLKVLGTG…AEEIKEHLFF (270 aa). ATP is bound by residues 54–62 and Lys-80; that span reads LGTGAYGKV. Catalysis depends on Asp-176, which acts as the Proton acceptor. Residue Ser-211 is modified to Phosphoserine; by autocatalysis. The 69-residue stretch at 318–386 folds into the AGC-kinase C-terminal domain; the sequence is EKIKWDDLAA…VAPSILFKRN (69 aa). The residue at position 359 (Ser-359) is a Phosphoserine; by MAPK1, MAPK3 and MAPK14. Phosphoserine; by autocatalysis occurs at positions 375 and 380. One can recognise a Protein kinase 2 domain in the interval 428 to 675; that stretch reads DKPLGEGSFS…SCDLWSLGVI (248 aa). ATP-binding positions include 431–440 and Lys-454; that span reads LGEGSFSICR. Catalysis depends on Asp-608, which acts as the Proton acceptor. Thr-645 is modified (phosphothreonine; by MAPK1, MAPK3 and MAPK14). Phosphoserine is present on residues Ser-711, Ser-721, Ser-755, and Ser-759. A Phosphothreonine modification is found at Thr-764. Residues 805–863 form a disordered region; it reads AKRRKMKRTSTSTETRSSSSESSRSSSSQSHGKTTPTKTLQPSNPTEGSNPDTLFQFSD. Over residues 813–832 the composition is skewed to low complexity; that stretch reads TSTSTETRSSSSESSRSSSS. Residues Ser-814, Ser-816, and Ser-822 each carry the phosphoserine; by autocatalysis modification. Residues 833-863 are compositionally biased toward polar residues; sequence QSHGKTTPTKTLQPSNPTEGSNPDTLFQFSD. At Ser-862 the chain carries Phosphoserine.

This sequence belongs to the protein kinase superfamily. AGC Ser/Thr protein kinase family. S6 kinase subfamily. In terms of assembly, forms a complex with either MAPK1/ERK2 or MAPK3/ERK1 in quiescent cells which transiently dissociates following mitogenic stimulation. Also associates with MAPK14/p38-alpha. Activated RPS6KA5 associates with and phosphorylates the NF-kappa-B p65 subunit RELA. Interacts with CREBBP and EP300. It depends on Mg(2+) as a cofactor. In terms of processing, ser-375 and Thr-645 phosphorylation is required for kinase activity. Ser-375 and Ser-211 are autophosphorylated by the C-terminal kinase domain, and their phosphorylation is essential for the catalytic activity of the N-terminal kinase domain. Phosphorylated at Ser-359, Thr-645 and Thr-764 by MAPK1/ERK2, MAPK3/ERK1 and MAPK14/p38-alpha. Autophosphorylated at Ser-814, Ser-816 and Ser-822 by the N-terminal kinase domain. Post-translationally, ubiquitinated.

The protein localises to the nucleus. The enzyme catalyses L-seryl-[protein] + ATP = O-phospho-L-seryl-[protein] + ADP + H(+). It catalyses the reaction L-threonyl-[protein] + ATP = O-phospho-L-threonyl-[protein] + ADP + H(+). Activated by phosphorylation at Ser-359, Thr-645 and Thr-764 by MAPK1/ERK2, MAPK3/ERK1 and MAPK14/p38-alpha, and by further autophosphorylation of Ser-211, Ser-375 and Ser-380 by the activated C-terminal kinase domain. The active N-terminal kinase domain finally phosphorylates downstream substrates, as well as Ser-814, Ser-816 and Ser-822 in its own C-terminal region. Serine/threonine-protein kinase that is required for the mitogen or stress-induced phosphorylation of the transcription factors CREB1 and ATF1 and for the regulation of the transcription factors RELA, STAT3 and ETV1/ER81, and that contributes to gene activation by histone phosphorylation and functions in the regulation of inflammatory genes. Phosphorylates CREB1 and ATF1 in response to mitogenic or stress stimuli such as UV-C irradiation, epidermal growth factor (EGF) and anisomycin. Plays an essential role in the control of RELA transcriptional activity in response to TNF and upon glucocorticoid, associates in the cytoplasm with the glucocorticoid receptor NR3C1 and contributes to RELA inhibition and repression of inflammatory gene expression. In skeletal myoblasts is required for phosphorylation of RELA at 'Ser-276' during oxidative stress. In erythropoietin-stimulated cells, is necessary for the 'Ser-727' phosphorylation of STAT3 and regulation of its transcriptional potential. Phosphorylates ETV1/ER81 at 'Ser-191' and 'Ser-216', and thereby regulates its ability to stimulate transcription, which may be important during development and breast tumor formation. Directly represses transcription via phosphorylation of 'Ser-1' of histone H2A. Phosphorylates 'Ser-10' of histone H3 in response to mitogenics, stress stimuli and EGF, which results in the transcriptional activation of several immediate early genes, including proto-oncogenes c-fos/FOS and c-jun/JUN. May also phosphorylate 'Ser-28' of histone H3. Mediates the mitogen- and stress-induced phosphorylation of high mobility group protein 1 (HMGN1/HMG14). In lipopolysaccharide-stimulated primary macrophages, acts downstream of the Toll-like receptor TLR4 to limit the production of pro-inflammatory cytokines. Functions probably by inducing transcription of the MAP kinase phosphatase DUSP1 and the anti-inflammatory cytokine interleukin 10 (IL10), via CREB1 and ATF1 transcription factors. Plays a role in neuronal cell death by mediating the downstream effects of excitotoxic injury. Phosphorylates TRIM7 at 'Ser-106' in response to growth factor signaling via the MEK/ERK pathway, thereby stimulating its ubiquitin ligase activity. This chain is Ribosomal protein S6 kinase alpha-5 (Rps6ka5), found in Mus musculus (Mouse).